Reading from the N-terminus, the 252-residue chain is MSKFEDIRGVAFDLDGTLVDSAPGLAAAVDMALYALELPVAGEERVITWIGNGADVLMERALTWARQERATLRKTMGKPPVDDDIPAEEQVRILRKLFDRYYGEVAEEGTFLFPHVADTLGALQAKGLPLGLVTNKPTPFVAPLLEALDIAKYFSVVIGGDDVQNKKPHPDPLLLVAERMGIAPQQMLFVGDSRNDIQAAKAAGCPSVGLTYGYNYGEAIDLSQPDVIYQSINDLLPALGLPHSENQESKND.

Catalysis depends on aspartate 13, which acts as the Nucleophile. Mg(2+) is bound by residues aspartate 13, aspartate 15, and aspartate 192.

It belongs to the HAD-like hydrolase superfamily. CbbY/CbbZ/Gph/YieH family. Monomer. Mg(2+) serves as cofactor. It depends on chloride as a cofactor.

It carries out the reaction 2-phosphoglycolate + H2O = glycolate + phosphate. Its pathway is organic acid metabolism; glycolate biosynthesis; glycolate from 2-phosphoglycolate: step 1/1. Functionally, specifically catalyzes the dephosphorylation of 2-phosphoglycolate. Is involved in the dissimilation of the intracellular 2-phosphoglycolate formed during the DNA repair of 3'-phosphoglycolate ends, a major class of DNA lesions induced by oxidative stress. The sequence is that of Phosphoglycolate phosphatase from Escherichia coli O157:H7.